The chain runs to 52 residues: UPF0181 protein NTHI1697 (52 aa).

This sequence belongs to the UPF0181 family.

In Haemophilus influenzae (strain 86-028NP), this protein is UPF0181 protein NTHI1697.